The following is a 214-amino-acid chain: 3,4-dihydroxy-2-butanone 4-phosphate synthase (214 aa).

D-ribulose 5-phosphate is bound by residues 37-38 (RE), Asp-42, 150-154 (RRGHT), and Glu-174. A Mg(2+)-binding site is contributed by Glu-38. His-153 provides a ligand contact to Mg(2+).

The protein belongs to the DHBP synthase family. As to quaternary structure, homodimer. Mg(2+) is required as a cofactor. Mn(2+) serves as cofactor.

The catalysed reaction is D-ribulose 5-phosphate = (2S)-2-hydroxy-3-oxobutyl phosphate + formate + H(+). It participates in cofactor biosynthesis; riboflavin biosynthesis; 2-hydroxy-3-oxobutyl phosphate from D-ribulose 5-phosphate: step 1/1. Its function is as follows. Catalyzes the conversion of D-ribulose 5-phosphate to formate and 3,4-dihydroxy-2-butanone 4-phosphate. In Nitratidesulfovibrio vulgaris (strain DP4) (Desulfovibrio vulgaris), this protein is 3,4-dihydroxy-2-butanone 4-phosphate synthase.